The sequence spans 2289 residues: Protein Ycf2 (2289 aa).

Residue 1643-1650 (GSIGTGRS) coordinates ATP.

Belongs to the Ycf2 family.

It is found in the plastid. Its subcellular location is the chloroplast stroma. Functionally, probable ATPase of unknown function. Its presence in a non-photosynthetic plant (Epifagus virginiana) and experiments in tobacco indicate that it has an essential function which is probably not related to photosynthesis. This is Protein Ycf2 from Aethionema grandiflorum (Persian stone-cress).